The primary structure comprises 412 residues: Serine hydroxymethyltransferase (412 aa).

(6S)-5,6,7,8-tetrahydrofolate contacts are provided by residues leucine 117 and 121–123 (GHL). An N6-(pyridoxal phosphate)lysine modification is found at lysine 226.

The protein belongs to the SHMT family. As to quaternary structure, homodimer. Requires pyridoxal 5'-phosphate as cofactor.

It is found in the cytoplasm. It catalyses the reaction (6R)-5,10-methylene-5,6,7,8-tetrahydrofolate + glycine + H2O = (6S)-5,6,7,8-tetrahydrofolate + L-serine. It participates in one-carbon metabolism; tetrahydrofolate interconversion. It functions in the pathway amino-acid biosynthesis; glycine biosynthesis; glycine from L-serine: step 1/1. Functionally, catalyzes the reversible interconversion of serine and glycine with tetrahydrofolate (THF) serving as the one-carbon carrier. This reaction serves as the major source of one-carbon groups required for the biosynthesis of purines, thymidylate, methionine, and other important biomolecules. Also exhibits THF-independent aldolase activity toward beta-hydroxyamino acids, producing glycine and aldehydes, via a retro-aldol mechanism. This chain is Serine hydroxymethyltransferase, found in Symbiobacterium thermophilum (strain DSM 24528 / JCM 14929 / IAM 14863 / T).